Reading from the N-terminus, the 131-residue chain is ATP synthase lipid-binding protein, mitochondrial (131 aa).

A mitochondrion-targeting transit peptide spans 1 to 56; the sequence is MLSAARLIAPAARSAIFSNAAVVRPLAAVSTQTQLVPAAPAQLSAVRSFQTTSVTK. Residues 72 to 92 traverse the membrane as a helical segment; that stretch reads VGVAGSGAGIGTVFGSLIIGY. K99 bears the N6,N6,N6-trimethyllysine mark. The helical transmembrane segment at 107 to 127 threads the bilayer; it reads ILGFALSEAMGLFCLMMAFLL.

This sequence belongs to the ATPase C chain family. As to quaternary structure, F-type ATPases have 2 components, CF(1) - the catalytic core - and CF(0) - the membrane proton channel. CF(1) has five subunits: alpha(3), beta(3), gamma(1), delta(1), epsilon(1). CF(0) has three main subunits: a, b and c. Post-translationally, trimethylated by ATPSCKMT at Lys-99. Methylation may be required for proper incorporation of the C subunit into the ATP synthase complex and mitochondrial respiration.

It is found in the mitochondrion membrane. Functionally, mitochondrial membrane ATP synthase (F(1)F(0) ATP synthase or Complex V) produces ATP from ADP in the presence of a proton gradient across the membrane which is generated by electron transport complexes of the respiratory chain. F-type ATPases consist of two structural domains, F(1) - containing the extramembraneous catalytic core and F(0) - containing the membrane proton channel, linked together by a central stalk and a peripheral stalk. During catalysis, ATP synthesis in the catalytic domain of F(1) is coupled via a rotary mechanism of the central stalk subunits to proton translocation. Part of the complex F(0) domain. A homomeric c-ring of probably 10 subunits is part of the complex rotary element. This Manduca sexta (Tobacco hawkmoth) protein is ATP synthase lipid-binding protein, mitochondrial.